We begin with the raw amino-acid sequence, 354 residues long: Glyceraldehyde-3-phosphate dehydrogenase (354 aa).

Residues 11–12 (TI) and G108 contribute to the NAD(+) site. 137-139 (SCN) is a D-glyceraldehyde 3-phosphate binding site. C138 (nucleophile) is an active-site residue. R166 lines the NAD(+) pocket. 192–193 (HG) is a D-glyceraldehyde 3-phosphate binding site. Residue Q299 coordinates NAD(+).

Belongs to the glyceraldehyde-3-phosphate dehydrogenase family. Homotetramer.

Its subcellular location is the cytoplasm. It carries out the reaction D-glyceraldehyde 3-phosphate + phosphate + NADP(+) = (2R)-3-phospho-glyceroyl phosphate + NADPH + H(+). The catalysed reaction is D-glyceraldehyde 3-phosphate + phosphate + NAD(+) = (2R)-3-phospho-glyceroyl phosphate + NADH + H(+). It functions in the pathway carbohydrate degradation; glycolysis; pyruvate from D-glyceraldehyde 3-phosphate: step 1/5. The protein is Glyceraldehyde-3-phosphate dehydrogenase of Haloarcula marismortui (strain ATCC 43049 / DSM 3752 / JCM 8966 / VKM B-1809) (Halobacterium marismortui).